Consider the following 397-residue polypeptide: Acetate kinase (397 aa).

Position 8 (Asn-8) interacts with Mg(2+). Lys-15 serves as a coordination point for ATP. Residue Arg-89 participates in substrate binding. Asp-146 (proton donor/acceptor) is an active-site residue. ATP-binding positions include 206–210, 281–283, and 329–333; these read HLGNG, DLR, and GIGEN. Glu-382 is a binding site for Mg(2+).

The protein belongs to the acetokinase family. In terms of assembly, homodimer. The cofactor is Mg(2+). It depends on Mn(2+) as a cofactor.

It localises to the cytoplasm. It carries out the reaction acetate + ATP = acetyl phosphate + ADP. Its pathway is metabolic intermediate biosynthesis; acetyl-CoA biosynthesis; acetyl-CoA from acetate: step 1/2. In terms of biological role, catalyzes the formation of acetyl phosphate from acetate and ATP. Can also catalyze the reverse reaction. This chain is Acetate kinase, found in Bacillus cytotoxicus (strain DSM 22905 / CIP 110041 / 391-98 / NVH 391-98).